Reading from the N-terminus, the 575-residue chain is Sialate:O-sulfotransferase 1 (575 aa).

The Cytoplasmic segment spans residues 1-14 (MAKPFFRLQKFLRR). A helical; Signal-anchor for type II membrane protein membrane pass occupies residues 15–35 (TQFLLFFLTAAYLMTGSLLLL). Residues 36-575 (QRVRVALPQG…TGLPREYVPR (540 aa)) lie on the Extracellular side of the membrane. WSC domains lie at 142 to 234 (RGTY…YRVD) and 245 to 340 (TATY…DTRC). N-linked (GlcNAc...) asparagine glycosylation is found at asparagine 257 and asparagine 348.

It belongs to the WSCD family.

It localises to the golgi apparatus membrane. It catalyses the reaction a ganglioside GM1b + 3'-phosphoadenylyl sulfate = an 8-O-sulfo-ganglioside GM1b + adenosine 3',5'-bisphosphate + H(+). Sialate:O-sulfotransferase which catalyzes 8-O-sulfation at the Sia-glycan level using 3'-phosphoadenosine 5'-phosphosulfate (PAPS) as a donor, forming 8-O-sulfated Sia (Sia8S)-glycans. Displays selectivity toward glycolipids such as GM1 gangliosides. This chain is Sialate:O-sulfotransferase 1 (WSCD1), found in Homo sapiens (Human).